Here is a 134-residue protein sequence, read N- to C-terminus: UPF0412 protein YaaI (134 aa).

The first 23 residues, 1-23 (MKSVFTLSASLAISLMLCCTAQA), serve as a signal peptide directing secretion.

It belongs to the UPF0412 family.

In Escherichia coli O17:K52:H18 (strain UMN026 / ExPEC), this protein is UPF0412 protein YaaI.